The following is a 132-amino-acid chain: Large-conductance mechanosensitive channel (132 aa).

The next 3 membrane-spanning stretches (helical) occupy residues 14 to 34 (VIDL…VSSL), 38 to 58 (IITP…LKIT), and 69 to 89 (FIQT…FVKV).

This sequence belongs to the MscL family. Homopentamer.

The protein resides in the cell membrane. Channel that opens in response to stretch forces in the membrane lipid bilayer. May participate in the regulation of osmotic pressure changes within the cell. This Bacillus thuringiensis (strain Al Hakam) protein is Large-conductance mechanosensitive channel.